The chain runs to 812 residues: Probable inorganic carbon transporter subunit DabA (812 aa).

Zn(2+)-binding residues include C337, D339, H499, and C514.

It belongs to the inorganic carbon transporter (TC 9.A.2) DabA family. As to quaternary structure, forms a complex with DabB. It depends on Zn(2+) as a cofactor.

It is found in the cell inner membrane. Part of an energy-coupled inorganic carbon pump. The chain is Probable inorganic carbon transporter subunit DabA from Xanthomonas oryzae pv. oryzae (strain MAFF 311018).